Reading from the N-terminus, the 399-residue chain is Acetylornithine aminotransferase (399 aa).

Residues 102–103 (GA) and phenylalanine 135 each bind pyridoxal 5'-phosphate. Position 138 (arginine 138) interacts with N(2)-acetyl-L-ornithine. 220-223 (DEIQ) lines the pyridoxal 5'-phosphate pocket. Lysine 249 carries the post-translational modification N6-(pyridoxal phosphate)lysine. Serine 277 serves as a coordination point for N(2)-acetyl-L-ornithine. A pyridoxal 5'-phosphate-binding site is contributed by threonine 278.

The protein belongs to the class-III pyridoxal-phosphate-dependent aminotransferase family. ArgD subfamily. As to quaternary structure, homodimer. It depends on pyridoxal 5'-phosphate as a cofactor.

It is found in the cytoplasm. The catalysed reaction is N(2)-acetyl-L-ornithine + 2-oxoglutarate = N-acetyl-L-glutamate 5-semialdehyde + L-glutamate. It functions in the pathway amino-acid biosynthesis; L-arginine biosynthesis; N(2)-acetyl-L-ornithine from L-glutamate: step 4/4. The protein is Acetylornithine aminotransferase of Oceanobacillus iheyensis (strain DSM 14371 / CIP 107618 / JCM 11309 / KCTC 3954 / HTE831).